Consider the following 473-residue polypeptide: MNTDTPTFEAQQVVRLRRGDLIRRLLQRDKTPLAILLTAAVVGTVTGLIGVAFEKAVTWVQNLRIGALVQTADYAILVWPLAFILSALLAMVGYFLVRKFAPEAGGSGIPEIEGALEELRPVRWWRVLPVKFVGGMGTLGAGMVLGREGPTVQIGGNIGRMVLDLFRMRSAEARHTLLATGAAAGLSAAFNAPLAGILFIIEEMRPQFRYNLISIKAVFTGVIMSSIVFRIFNGEAPIIEVGKLSNAPVNTLWLYLILGMIFGCVGPLFNHLVLRTQDMFQRFHGGEIKKWVLMGGAIGGLCGILGLIEPEAAGGGFNLIPIAAAGNYSVGLLLFIFIARVLTTLLCFSSGAPGGIFAPMLALGTLLGTAFGMAAAACFPQYHLEAGTFAIAGMGALLAASVRAPLTGIVLVLEMTDNYQLILPMIITCLGATLLAQFMGGKPLYSTILARTLAKQDAEQAAKSQRSVAGENT.

The Cytoplasmic segment spans residues 1–32 (MNTDTPTFEAQQVVRLRRGDLIRRLLQRDKTP). Residues 33 to 69 (LAILLTAAVVGTVTGLIGVAFEKAVTWVQNLRIGALV) traverse the membrane as a helical segment. The Periplasmic segment spans residues 70–76 (QTADYAI). A helical transmembrane segment spans residues 77–100 (LVWPLAFILSALLAMVGYFLVRKF). The Cytoplasmic segment spans residues 101–108 (APEAGGSG). A Selectivity filter part_1 motif is present at residues 106–110 (GSGIP). S107 provides a ligand contact to chloride. The helical intramembrane region spans 109–116 (IPEIEGAL). Topologically, residues 117 to 123 (EELRPVR) are cytoplasmic. A helical transmembrane segment spans residues 124 to 141 (WWRVLPVKFVGGMGTLGA). Topologically, residues 142-147 (GMVLGR) are periplasmic. Positions 146–150 (GREGP) match the Selectivity filter part_2 motif. The helical transmembrane segment at 148–166 (EGPTVQIGGNIGRMVLDLF) threads the bilayer. Over 167-176 (RMRSAEARHT) the chain is Cytoplasmic. 2 consecutive intramembrane regions (helical) follow at residues 177 to 189 (LLATGAAAGLSAA) and 193 to 201 (PLAGILFII). The Cytoplasmic portion of the chain corresponds to 202-214 (EEMRPQFRYNLIS). A helical transmembrane segment spans residues 215–232 (IKAVFTGVIMSSIVFRIF). Topologically, residues 233-252 (NGEAPIIEVGKLSNAPVNTL) are periplasmic. Residues 253–281 (WLYLILGMIFGCVGPLFNHLVLRTQDMFQ) traverse the membrane as a helical segment. Topologically, residues 282–287 (RFHGGE) are cytoplasmic. Residues 288-309 (IKKWVLMGGAIGGLCGILGLIE) form a helical membrane-spanning segment. Topologically, residues 310–329 (PEAAGGGFNLIPIAAAGNYS) are periplasmic. The chain crosses the membrane as a helical span at residues 330–349 (VGLLLFIFIARVLTTLLCFS). At 350–354 (SGAPG) the chain is on the cytoplasmic side. The short motif at 355 to 359 (GIFAP) is the Selectivity filter part_3 element. A helical transmembrane segment spans residues 355 to 376 (GIFAPMLALGTLLGTAFGMAAA). Residues I356 and F357 each coordinate chloride. The Periplasmic segment spans residues 377–386 (ACFPQYHLEA). Positions 387 to 401 (GTFAIAGMGALLAAS) form an intramembrane region, helical. The segment at residues 402–404 (VRA) is an intramembrane region (note=Loop between two helices). Positions 405 to 416 (PLTGIVLVLEMT) form an intramembrane region, helical. Positions 417–421 (DNYQL) form an intramembrane region, note=Loop between two helices. A helical membrane pass occupies residues 422–438 (ILPMIITCLGATLLAQF). Residues 439–473 (MGGKPLYSTILARTLAKQDAEQAAKSQRSVAGENT) are Cytoplasmic-facing. Y445 contacts chloride.

It belongs to the chloride channel (TC 2.A.49) family. ClcA subfamily. Homodimer.

Its subcellular location is the cell inner membrane. The enzyme catalyses 2 chloride(in) + H(+)(out) = 2 chloride(out) + H(+)(in). Functionally, proton-coupled chloride transporter. Functions as antiport system and exchanges two chloride ions for 1 proton. Probably acts as an electrical shunt for an outwardly-directed proton pump that is linked to amino acid decarboxylation, as part of the extreme acid resistance (XAR) response. This chain is H(+)/Cl(-) exchange transporter ClcA, found in Citrobacter koseri (strain ATCC BAA-895 / CDC 4225-83 / SGSC4696).